A 127-amino-acid polypeptide reads, in one-letter code: DNA-directed RNA polymerase subunit omega (127 aa).

Belongs to the RNA polymerase subunit omega family. The RNAP catalytic core consists of 2 alpha, 1 beta, 1 beta' and 1 omega subunit. When a sigma factor is associated with the core the holoenzyme is formed, which can initiate transcription.

It catalyses the reaction RNA(n) + a ribonucleoside 5'-triphosphate = RNA(n+1) + diphosphate. Promotes RNA polymerase assembly. Latches the N- and C-terminal regions of the beta' subunit thereby facilitating its interaction with the beta and alpha subunits. This Rickettsia rickettsii (strain Iowa) protein is DNA-directed RNA polymerase subunit omega.